A 264-amino-acid polypeptide reads, in one-letter code: Signal peptidase I (264 aa).

At 1–18 (MNRDNINSNKTVKQEFGS) the chain is on the cytoplasmic side. The helical transmembrane segment at 19–39 (FAFVICIALVIRILIMEPFTV) threads the bilayer. Residues 40–264 (PTGSMKATIL…IFKNLYNVDE (225 aa)) are Extracellular-facing. Residues Ser43 and Lys106 contribute to the active site.

The protein belongs to the peptidase S26 family.

The protein localises to the cell membrane. The catalysed reaction is Cleavage of hydrophobic, N-terminal signal or leader sequences from secreted and periplasmic proteins.. The polypeptide is Signal peptidase I (lepB) (Rickettsia prowazekii (strain Madrid E)).